Reading from the N-terminus, the 189-residue chain is MRVLGVDPGLTRCGFGVVDGGGGRTVTPIAVDVVRTPADLELSSRLLRISEAAESWIDLHRPEVVAIERVFSQHNVRTAMGTAQAGGVVALAAARRGIPVCFHTPSEVKAAVTGSGSADKAQVTAMVTRILKLAAAPKPADAADALALAICHCWRAPMIERMARAEAAAAEQKRRYQARLAEVKKAGTR.

Catalysis depends on residues aspartate 7, glutamate 68, and aspartate 141. Aspartate 7, glutamate 68, and aspartate 141 together coordinate Mg(2+).

It belongs to the RuvC family. As to quaternary structure, homodimer which binds Holliday junction (HJ) DNA. The HJ becomes 2-fold symmetrical on binding to RuvC with unstacked arms; it has a different conformation from HJ DNA in complex with RuvA. In the full resolvosome a probable DNA-RuvA(4)-RuvB(12)-RuvC(2) complex forms which resolves the HJ. Mg(2+) is required as a cofactor.

The protein resides in the cytoplasm. It carries out the reaction Endonucleolytic cleavage at a junction such as a reciprocal single-stranded crossover between two homologous DNA duplexes (Holliday junction).. Its function is as follows. The RuvA-RuvB-RuvC complex processes Holliday junction (HJ) DNA during genetic recombination and DNA repair. Endonuclease that resolves HJ intermediates. Cleaves cruciform DNA by making single-stranded nicks across the HJ at symmetrical positions within the homologous arms, yielding a 5'-phosphate and a 3'-hydroxyl group; requires a central core of homology in the junction. The consensus cleavage sequence is 5'-(A/T)TT(C/G)-3'. Cleavage occurs on the 3'-side of the TT dinucleotide at the point of strand exchange. HJ branch migration catalyzed by RuvA-RuvB allows RuvC to scan DNA until it finds its consensus sequence, where it cleaves and resolves the cruciform DNA. This chain is Crossover junction endodeoxyribonuclease RuvC, found in Rhodococcus jostii (strain RHA1).